Here is a 475-residue protein sequence, read N- to C-terminus: MRNFTKQYINGEWVESTSGETLEVINPATEEVAGTIAKGNKEDVEKAVEAADNVYLEFRHTSVKERQDLLDQIVQEYKNRKEDLIQAITDELGAPLSVAENVHYQMGLDHFEAARDALNDFQFEERRGDDLVVKEAIGVSGLITPWNFPTNQTSLKLAAAFAAGSPVVFKPSEETPFAAIILAEIFDKVGVPKGVFNLVNGDGQGVGNPLSEHPKVRMMSFTGSGPTGSSIMKKAAEDFKKVSLELGGKSPYIILDDADIDGAASAAANKVVFNTGQVCTAGTRTIVPASIKEDFLTAVKEKFSQVKVGNPREEGTQVGPIISKKQFDQVQAYIDKGIEEGAELLYGGPGKPEGLDKGYFARPTIFNNVDNSMTIAQEEIFGPVMSVITYNDLDEAIKIANDTKYGLAGYVYGSDKDTLHKVARSIEAGTVEINEAGRKPDLPFGGYKQSGLGREWGDYGIEEFLEVKSIAGYYN.

An NAD(+)-binding site is contributed by 201 to 207 (GDGQGVG). Residues Glu-245 and Cys-279 contribute to the active site.

The protein belongs to the aldehyde dehydrogenase family.

The catalysed reaction is an aldehyde + NAD(+) + H2O = a carboxylate + NADH + 2 H(+). In Staphylococcus saprophyticus subsp. saprophyticus (strain ATCC 15305 / DSM 20229 / NCIMB 8711 / NCTC 7292 / S-41), this protein is Putative aldehyde dehydrogenase SSP0762.